A 99-amino-acid polypeptide reads, in one-letter code: Large ribosomal subunit protein uL23 (99 aa).

This sequence belongs to the universal ribosomal protein uL23 family. In terms of assembly, part of the 50S ribosomal subunit. Contacts protein L29, and trigger factor when it is bound to the ribosome.

Its function is as follows. One of the early assembly proteins it binds 23S rRNA. One of the proteins that surrounds the polypeptide exit tunnel on the outside of the ribosome. Forms the main docking site for trigger factor binding to the ribosome. This is Large ribosomal subunit protein uL23 from Xanthomonas axonopodis pv. citri (strain 306).